A 136-amino-acid polypeptide reads, in one-letter code: MSRQDVRQEIQRLIEEYQLVGELLTNLQAQHATVSELLEELTTALDGVRLLKGGAGERLVHIGAGLFVKGVFETKEVLTPLGAGYHAFLDLDNAERVLQERIEEYSRLKTSLEENIGKLAERAEQIRQVLERLGIR.

This sequence belongs to the prefoldin subunit alpha family. As to quaternary structure, heterohexamer of two alpha and four beta subunits.

Its subcellular location is the cytoplasm. In terms of biological role, molecular chaperone capable of stabilizing a range of proteins. Seems to fulfill an ATP-independent, HSP70-like function in archaeal de novo protein folding. The chain is Prefoldin subunit alpha from Pyrobaculum arsenaticum (strain DSM 13514 / JCM 11321 / PZ6).